Reading from the N-terminus, the 459-residue chain is Ceramide glucosyltransferase 3 (459 aa).

The chain crosses the membrane as a helical span at residues 77–97 (LIAIVGFVFVFCLYLIHIIAL). Position 156 (aspartate 156) is a short sequence motif, D1. A short sequence motif (D2) is located at residue aspartate 208. Residue aspartate 302 is a short sequence motif, D3. Aspartate 302 serves as the catalytic Proton acceptor. The (Q/R)XXRW motif lies at 338–342 (RICRW). Helical transmembrane passes span 367 to 387 (LIMAFSLNHLVGLNIMPILIL) and 415 to 435 (FMLIWLLRELTAPFVFIKALL).

Belongs to the glycosyltransferase 2 family. As to expression, expressed in pharyngeal intestinal valve, intestinal rectal valve and hypodermis.

It localises to the membrane. The enzyme catalyses an N-acylsphing-4-enine + UDP-alpha-D-glucose = a beta-D-glucosyl-(1&lt;-&gt;1')-N-acylsphing-4-enine + UDP + H(+). It catalyses the reaction an N-acyl-15-methylhexadecasphing-4-enine + UDP-alpha-D-glucose = an N-acyl-1-beta-D-glucosyl-15-methylhexadecasphing-4-enine + UDP + H(+). The protein operates within lipid metabolism; sphingolipid metabolism. Its function is as follows. Catalyzes the first glycosylation step in glycosphingolipid biosynthesis, the transfer of glucose to ceramide to produce glucosylceramides (GlcCer). GlcCer are known to contribute to the physical properties and physiological functions of membranes and may regulate signal transduction. Seems to be the major active form in the nematode. Only branched-chain sphingoid bases like 15-methylhexadecasphing-4-enine are used for generating complex sphingolipids in Caenorhabditis elegans. Together with cgt-1, plays a role in the trafficking of proteins such as mig-14 to the cell membrane in intestinal cells. The sequence is that of Ceramide glucosyltransferase 3 from Caenorhabditis elegans.